The following is a 276-amino-acid chain: NAD-capped RNA hydrolase NudC (276 aa).

Arg82 contacts substrate. 2 residues coordinate Zn(2+): Cys112 and Cys115. A substrate-binding site is contributed by Glu125. Residues Cys130 and Cys133 each coordinate Zn(2+). Tyr138 provides a ligand contact to substrate. Residues Pro139–Tyr262 form the Nudix hydrolase domain. Positions 172, 188, and 192 each coordinate a divalent metal cation. The Nudix box motif lies at Gly173–Ser194. Gln206–Ser213 contacts substrate. Residue Glu233 coordinates a divalent metal cation. Substrate is bound at residue Ala255.

It belongs to the Nudix hydrolase family. NudC subfamily. Homodimer. Mg(2+) serves as cofactor. It depends on Mn(2+) as a cofactor. The cofactor is Zn(2+).

It catalyses the reaction a 5'-end NAD(+)-phospho-ribonucleoside in mRNA + H2O = a 5'-end phospho-adenosine-phospho-ribonucleoside in mRNA + beta-nicotinamide D-ribonucleotide + 2 H(+). The catalysed reaction is NAD(+) + H2O = beta-nicotinamide D-ribonucleotide + AMP + 2 H(+). The enzyme catalyses NADH + H2O = reduced beta-nicotinamide D-ribonucleotide + AMP + 2 H(+). Functionally, mRNA decapping enzyme that specifically removes the nicotinamide adenine dinucleotide (NAD) cap from a subset of mRNAs by hydrolyzing the diphosphate linkage to produce nicotinamide mononucleotide (NMN) and 5' monophosphate mRNA. The NAD-cap is present at the 5'-end of some mRNAs and stabilizes RNA against 5'-processing. Has preference for mRNAs with a 5'-end purine. Catalyzes the hydrolysis of a broad range of dinucleotide pyrophosphates. The polypeptide is NAD-capped RNA hydrolase NudC (Pseudomonas fluorescens (strain ATCC BAA-477 / NRRL B-23932 / Pf-5)).